The sequence spans 944 residues: Proline and serine-rich protein 1 (944 aa).

Met-1 is modified (N-acetylmethionine). Disordered regions lie at residues 233 to 285 (PPPY…PVPT), 369 to 396 (PGPS…SEAF), 608 to 633 (KTEP…HGTL), and 912 to 944 (ESYP…SGWQ). Residues 248-274 (LSNPSKPIQNQTFSTPASQLFSPHGSN) are compositionally biased toward polar residues. Over residues 275-285 (PSTPAATPVPT) the composition is skewed to low complexity. Positions 932–944 (FSLQPSLSQSGWQ) are enriched in polar residues.

Interacts with TET2 and OGT; this interaction mediates TET2 O-GlcNAcylation and stability by promoting the interaction between OGT and TET2. Interacts with KDM6A. Interacts with TET1. Glycosylated. Interaction with OGT leads to GlcNAcylation.

Mediates OGT interaction with and O-GlcNAcylation of TET2 to control TET2 stabilization at enhancers and CpG islands (CGIs). The sequence is that of Proline and serine-rich protein 1 from Homo sapiens (Human).